The sequence spans 81 residues: ATP synthase subunit c, chloroplastic (81 aa).

Helical transmembrane passes span 3–23 and 57–77; these read PLIPAASVIAAGLAVGLASIG and LAFMEALTIYGLVVALALLFA.

Belongs to the ATPase C chain family. In terms of assembly, F-type ATPases have 2 components, F(1) - the catalytic core - and F(0) - the membrane proton channel. F(1) has five subunits: alpha(3), beta(3), gamma(1), delta(1), epsilon(1). F(0) has four main subunits: a(1), b(1), b'(1) and c(10-14). The alpha and beta chains form an alternating ring which encloses part of the gamma chain. F(1) is attached to F(0) by a central stalk formed by the gamma and epsilon chains, while a peripheral stalk is formed by the delta, b and b' chains.

It localises to the plastid. The protein resides in the chloroplast thylakoid membrane. Its function is as follows. F(1)F(0) ATP synthase produces ATP from ADP in the presence of a proton or sodium gradient. F-type ATPases consist of two structural domains, F(1) containing the extramembraneous catalytic core and F(0) containing the membrane proton channel, linked together by a central stalk and a peripheral stalk. During catalysis, ATP synthesis in the catalytic domain of F(1) is coupled via a rotary mechanism of the central stalk subunits to proton translocation. Key component of the F(0) channel; it plays a direct role in translocation across the membrane. A homomeric c-ring of between 10-14 subunits forms the central stalk rotor element with the F(1) delta and epsilon subunits. The protein is ATP synthase subunit c, chloroplastic of Cycas taitungensis (Prince sago).